The sequence spans 247 residues: Cell division protein ZapD (247 aa).

It belongs to the ZapD family. As to quaternary structure, interacts with FtsZ.

Its subcellular location is the cytoplasm. Cell division factor that enhances FtsZ-ring assembly. Directly interacts with FtsZ and promotes bundling of FtsZ protofilaments, with a reduction in FtsZ GTPase activity. This Salmonella agona (strain SL483) protein is Cell division protein ZapD.